The following is a 463-amino-acid chain: DDB1- and CUL4-associated factor 12-like protein 1 (463 aa).

Positions 1 to 35 (MAQQQTGSRKRKAPAVEADAESSPSQGLAAADGEG) are disordered. 6 WD repeats span residues 87–137 (LTER…PLLR), 138–184 (DSEA…SLDP), 185–252 (LCLG…DVEA), 253–297 (IPRA…ALSR), 298–341 (LLSI…QQNI), and 342–376 (RPLC…LFYD).

It belongs to the WD repeat DCAF12 family.

This Homo sapiens (Human) protein is DDB1- and CUL4-associated factor 12-like protein 1 (DCAF12L1).